Consider the following 207-residue polypeptide: NADH-ubiquinone oxidoreductase chain 6 (207 aa).

The next 5 membrane-spanning stretches (helical) occupy residues 1-21 (MDFL…LVIQ), 28-48 (SVLF…LLGL), 50-70 (FFAL…FLFV), 88-108 (YLPV…ILID), and 158-178 (FYFF…AIVL).

It belongs to the complex I subunit 6 family.

Its subcellular location is the mitochondrion membrane. It catalyses the reaction a ubiquinone + NADH + 5 H(+)(in) = a ubiquinol + NAD(+) + 4 H(+)(out). Core subunit of the mitochondrial membrane respiratory chain NADH dehydrogenase (Complex I) that is believed to belong to the minimal assembly required for catalysis. Complex I functions in the transfer of electrons from NADH to the respiratory chain. The immediate electron acceptor for the enzyme is believed to be ubiquinone. The protein is NADH-ubiquinone oxidoreductase chain 6 (ND6) of Prototheca wickerhamii.